The chain runs to 212 residues: 2,3-bisphosphoglycerate-dependent phosphoglycerate mutase (212 aa).

Substrate contacts are provided by residues 9-16 (RHGQSEWN), 22-23 (TG), arginine 61, 88-91 (ERDY), lysine 99, 115-116 (RR), and 159-160 (GN). The active-site Tele-phosphohistidine intermediate is the histidine 10. The active-site Proton donor/acceptor is glutamate 88.

The protein belongs to the phosphoglycerate mutase family. BPG-dependent PGAM subfamily. As to quaternary structure, homodimer.

The enzyme catalyses (2R)-2-phosphoglycerate = (2R)-3-phosphoglycerate. The protein operates within carbohydrate degradation; glycolysis; pyruvate from D-glyceraldehyde 3-phosphate: step 3/5. Functionally, catalyzes the interconversion of 2-phosphoglycerate and 3-phosphoglycerate. This chain is 2,3-bisphosphoglycerate-dependent phosphoglycerate mutase, found in Methylorubrum populi (strain ATCC BAA-705 / NCIMB 13946 / BJ001) (Methylobacterium populi).